The sequence spans 120 residues: Chaperonin GroEL (120 aa).

Residue 23 to 27 coordinates ATP; sequence DGTTT.

The protein belongs to the chaperonin (HSP60) family. Forms a cylinder of 14 subunits composed of two heptameric rings stacked back-to-back. Interacts with the co-chaperonin GroES.

It is found in the cytoplasm. It carries out the reaction ATP + H2O + a folded polypeptide = ADP + phosphate + an unfolded polypeptide.. Together with its co-chaperonin GroES, plays an essential role in assisting protein folding. The GroEL-GroES system forms a nano-cage that allows encapsulation of the non-native substrate proteins and provides a physical environment optimized to promote and accelerate protein folding. The chain is Chaperonin GroEL from Mycobacterium xenopi.